The following is a 150-amino-acid chain: UPF0735 ACT domain-containing protein DSY2247 (150 aa).

One can recognise an ACT domain in the interval 74-149; the sequence is TFSLTLENTA…GVRKIEVIGQ (76 aa).

Belongs to the UPF0735 family.

In Desulfitobacterium hafniense (strain Y51), this protein is UPF0735 ACT domain-containing protein DSY2247.